We begin with the raw amino-acid sequence, 329 residues long: Beta-ketoacyl-[acyl-carrier-protein] synthase III (329 aa).

Catalysis depends on residues C123 and H256. An ACP-binding region spans residues 257 to 261; sequence QANIR. Residue N286 is part of the active site.

This sequence belongs to the thiolase-like superfamily. FabH family. As to quaternary structure, homodimer.

The protein resides in the cytoplasm. The enzyme catalyses malonyl-[ACP] + acetyl-CoA + H(+) = 3-oxobutanoyl-[ACP] + CO2 + CoA. The protein operates within lipid metabolism; fatty acid biosynthesis. Catalyzes the condensation reaction of fatty acid synthesis by the addition to an acyl acceptor of two carbons from malonyl-ACP. Catalyzes the first condensation reaction which initiates fatty acid synthesis and may therefore play a role in governing the total rate of fatty acid production. Possesses both acetoacetyl-ACP synthase and acetyl transacylase activities. Its substrate specificity determines the biosynthesis of branched-chain and/or straight-chain of fatty acids. The sequence is that of Beta-ketoacyl-[acyl-carrier-protein] synthase III from Burkholderia vietnamiensis (strain G4 / LMG 22486) (Burkholderia cepacia (strain R1808)).